The sequence spans 351 residues: Methylthioribose-1-phosphate isomerase (351 aa).

Residues 51–53, R94, and Q199 each bind substrate; that span reads RGA. The Proton donor role is filled by D240. 250–251 provides a ligand contact to substrate; it reads NK.

The protein belongs to the EIF-2B alpha/beta/delta subunits family. MtnA subfamily. Homodimer.

The enzyme catalyses 5-(methylsulfanyl)-alpha-D-ribose 1-phosphate = 5-(methylsulfanyl)-D-ribulose 1-phosphate. It participates in amino-acid biosynthesis; L-methionine biosynthesis via salvage pathway; L-methionine from S-methyl-5-thio-alpha-D-ribose 1-phosphate: step 1/6. Functionally, catalyzes the interconversion of methylthioribose-1-phosphate (MTR-1-P) into methylthioribulose-1-phosphate (MTRu-1-P). The polypeptide is Methylthioribose-1-phosphate isomerase (Bacillus thuringiensis subsp. konkukian (strain 97-27)).